A 323-amino-acid chain; its full sequence is tRNA dimethylallyltransferase (323 aa).

Position 12 to 19 (12 to 19) interacts with ATP; it reads GPTAAGKT. Residue 14-19 participates in substrate binding; it reads TAAGKT. Interaction with substrate tRNA stretches follow at residues 37–40 and 161–165; these read DSAL and QRLSR.

This sequence belongs to the IPP transferase family. In terms of assembly, monomer. Mg(2+) serves as cofactor.

The catalysed reaction is adenosine(37) in tRNA + dimethylallyl diphosphate = N(6)-dimethylallyladenosine(37) in tRNA + diphosphate. In terms of biological role, catalyzes the transfer of a dimethylallyl group onto the adenine at position 37 in tRNAs that read codons beginning with uridine, leading to the formation of N6-(dimethylallyl)adenosine (i(6)A). The protein is tRNA dimethylallyltransferase of Pseudomonas fluorescens (strain Pf0-1).